The following is an 820-amino-acid chain: Disintegrin and metalloproteinase domain-containing protein 29 (820 aa).

The N-terminal stretch at 1–18 is a signal peptide; it reads MKMLLLLHCLGVFLSCSG. Positions 19 to 193 are excised as a propeptide; sequence HIQDEHPQYH…TQKQSSYVGW (175 aa). Topologically, residues 194–674 are extracellular; it reads WIHFRIVEIV…GPPPKRKKKK (481 aa). Residues 198–390 form the Peptidase M12B domain; the sequence is RIVEIVVVID…RTKCLLETVH (193 aa). Residues asparagine 217 and asparagine 320 are each glycosylated (N-linked (GlcNAc...) asparagine). Intrachain disulfides connect cysteine 307–cysteine 384, cysteine 347–cysteine 369, and cysteine 349–cysteine 354. N-linked (GlcNAc...) asparagine glycans are attached at residues asparagine 368, asparagine 428, asparagine 469, asparagine 538, asparagine 545, asparagine 558, and asparagine 564. Positions 397 to 483 constitute a Disintegrin domain; sequence VKRCGNGVVE…KCPDDFYVED (87 aa). The cysteines at positions 455 and 475 are disulfide-linked. Intrachain disulfides connect cysteine 625-cysteine 636, cysteine 630-cysteine 642, and cysteine 644-cysteine 653. Positions 625 to 654 constitute an EGF-like domain; sequence CSPAFCNKRGICNNKHHCHCNYLWDPPNCL. A helical transmembrane segment spans residues 675-695; sequence KFCYLCILLLIVLFILLCCLY. At 696–820 the chain is on the cytoplasmic side; that stretch reads RLCKKSKPIK…SQSQPPVTPS (125 aa). The segment at 706–820 is disordered; sequence KQQDVQTPSA…SQSQPPVTPS (115 aa). The span at 715-727 shows a compositional bias: basic and acidic residues; that stretch reads AKEEEKIQRRPHE. The segment covering 738-820 has biased composition (low complexity); sequence PSQSQPPVTP…SQSQPPVTPS (83 aa). 9 consecutive repeat copies span residues 739-747, 748-756, 757-765, 766-774, 775-783, 784-792, 793-801, 802-810, and 811-819. Positions 739–819 are 9 X 9 AA approximate repeats; sequence SQSQPPVTPS…PSQSQPPVTP (81 aa).

As to expression, expressed specifically in testes.

It localises to the membrane. In terms of biological role, may be involved in spermatogenesis and fertilization. Seems to be a non catalytic metalloprotease-like protein. This Homo sapiens (Human) protein is Disintegrin and metalloproteinase domain-containing protein 29 (ADAM29).